We begin with the raw amino-acid sequence, 311 residues long: Coproporphyrin III ferrochelatase (311 aa).

Fe-coproporphyrin III contacts are provided by residues tyrosine 12, arginine 29, 45 to 46 (RY), serine 53, and tyrosine 124. Positions 182 and 263 each coordinate Fe(2+).

Belongs to the ferrochelatase family.

The protein localises to the cytoplasm. The catalysed reaction is Fe-coproporphyrin III + 2 H(+) = coproporphyrin III + Fe(2+). The protein operates within porphyrin-containing compound metabolism; protoheme biosynthesis. Functionally, involved in coproporphyrin-dependent heme b biosynthesis. Catalyzes the insertion of ferrous iron into coproporphyrin III to form Fe-coproporphyrin III. The sequence is that of Coproporphyrin III ferrochelatase from Bacillus mycoides (strain KBAB4) (Bacillus weihenstephanensis).